Reading from the N-terminus, the 89-residue chain is Small ribosomal subunit protein uS17 (89 aa).

This sequence belongs to the universal ribosomal protein uS17 family. In terms of assembly, part of the 30S ribosomal subunit.

One of the primary rRNA binding proteins, it binds specifically to the 5'-end of 16S ribosomal RNA. The polypeptide is Small ribosomal subunit protein uS17 (Novosphingobium aromaticivorans (strain ATCC 700278 / DSM 12444 / CCUG 56034 / CIP 105152 / NBRC 16084 / F199)).